Consider the following 281-residue polypeptide: L-cysteine S-thiosulfotransferase subunit SoxA (281 aa).

An N-terminal signal peptide occupies residues 1–25 (MTKHGFLLATLVLAGATLPIGPVTA). A disulfide bond links C99 and C130. Positions 175–281 (AAYEQGKRFY…LELNGPGARK (107 aa)) constitute a Cytochrome c domain. Residues C195 and H199 each coordinate heme. Position 238 (R238) interacts with substrate. C242 is a heme binding site. C242 (cysteine persulfide intermediate) is an active-site residue.

The protein belongs to the SoxA family. In terms of assembly, heterodimer of SoxA and SoxX. Heme serves as cofactor. Post-translationally, cysteine persulfide at Cys-242.

It localises to the periplasm. The catalysed reaction is L-cysteinyl-[SoxY protein] + thiosulfate + 2 Fe(III)-[cytochrome c] = S-sulfosulfanyl-L-cysteinyl-[SoxY protein] + 2 Fe(II)-[cytochrome c] + 2 H(+). The enzyme catalyses S-sulfanyl-L-cysteinyl-[SoxY protein] + thiosulfate + 2 Fe(III)-[cytochrome c] = S-(2-sulfodisulfanyl)-L-cysteinyl-[SoxY protein] + 2 Fe(II)-[cytochrome c] + 2 H(+). Its function is as follows. C-type monoheme cytochrome, which is part of the SoxAX cytochrome complex involved in sulfur oxidation. The SoxAX complex catalyzes the formation of a heterodisulfide bond between the conserved cysteine residue on a sulfur carrier SoxYZ complex subunit SoxY and thiosulfate or other inorganic sulfur substrates. This leads to the intermediary formation of conspicuous sulfur globules inside of the cells. The protein is L-cysteine S-thiosulfotransferase subunit SoxA of Allochromatium vinosum (Chromatium vinosum).